The following is a 204-amino-acid chain: MSKFIVIEGLDGAGKSTAIGFIKKYLDSKSLAAVYTREPGGTKVAEELRSIVLHNDYDEEIHPDSELLMIYAGRIQHYRNLIAPALTKGVNVVSDRFYWSSIAYQGGGRELGVDKLNVLNETFLKDCQPDLIIYLDIDPAIGLARAGKVGSPDRIEKAGLAFFDRTRAVFKSLVAANHNAYEIDASQSIDVIEKEIYAILDKYF.

9–16 provides a ligand contact to ATP; the sequence is GLDGAGKS.

The protein belongs to the thymidylate kinase family.

The catalysed reaction is dTMP + ATP = dTDP + ADP. Phosphorylation of dTMP to form dTDP in both de novo and salvage pathways of dTTP synthesis. This is Thymidylate kinase from Francisella philomiragia subsp. philomiragia (strain ATCC 25017 / CCUG 19701 / FSC 153 / O#319-036).